Here is an 81-residue protein sequence, read N- to C-terminus: MISKEKKLELVLKFGGSQKNTGDTRVQIAILTEDIESLKKHFAVNKKDKHSMRGFIAKVNQRKRLLAYLKEKDFNAYKQTI.

This sequence belongs to the universal ribosomal protein uS15 family. As to quaternary structure, part of the 30S ribosomal subunit. Forms a bridge to the 50S subunit in the 70S ribosome, contacting the 23S rRNA.

Functionally, one of the primary rRNA binding proteins, it binds directly to 16S rRNA where it helps nucleate assembly of the platform of the 30S subunit by binding and bridging several RNA helices of the 16S rRNA. Forms an intersubunit bridge (bridge B4) with the 23S rRNA of the 50S subunit in the ribosome. The sequence is that of Small ribosomal subunit protein uS15 from Mesomycoplasma hyorhinis (Mycoplasma hyorhinis).